An 89-amino-acid chain; its full sequence is Small ribosomal subunit protein uS15 (89 aa).

Belongs to the universal ribosomal protein uS15 family. In terms of assembly, part of the 30S ribosomal subunit. Forms a bridge to the 50S subunit in the 70S ribosome, contacting the 23S rRNA.

Functionally, one of the primary rRNA binding proteins, it binds directly to 16S rRNA where it helps nucleate assembly of the platform of the 30S subunit by binding and bridging several RNA helices of the 16S rRNA. In terms of biological role, forms an intersubunit bridge (bridge B4) with the 23S rRNA of the 50S subunit in the ribosome. The sequence is that of Small ribosomal subunit protein uS15 from Desulfotalea psychrophila (strain LSv54 / DSM 12343).